A 1122-amino-acid polypeptide reads, in one-letter code: TSET complex member tstF (1122 aa).

Positions 88-126 (SSSASGINGTNNNNSGSNSSNNNNNNNGSLSNSPNNNNN) are enriched in low complexity. Disordered regions lie at residues 88-131 (SSSA…AFIG) and 178-215 (QTLHNRSPNNTIKLSPNSSNNDSLNNNNNNINNNSTNS). The span at 178–190 (QTLHNRSPNNTIK) shows a compositional bias: polar residues. Residues 191–215 (LSPNSSNNDSLNNNNNNINNNSTNS) are compositionally biased toward low complexity. WD repeat units lie at residues 298–337 (FENKSPNSVEFFSNSPFVAFGGPDSMIRLWNTEKWEIEKQ), 342–381 (PKGTIVKLKAIEIEGEFLVSGGTDGFVCVWNVKTGSLATQ), and 383–422 (SKVHEIVDLSYDYVTGQVMALTQDRHIMIYDLNTLKEVSK). Positions 731 to 775 (NGSVGGSSSNNSANSNNSNNNNNNNNNNSNNSNNNNNSSQPILEP) are disordered.

In terms of assembly, component of the TSET complex, a heterohexamer composed of tstA, tstB, tstC, tstD, tstE and tstF, which may act in plasma membrane turnover. tstA, tstB, tstC and tstD are likely to be the core complex members with tstE and tstF acting as associated scaffold proteins.

In Dictyostelium discoideum (Social amoeba), this protein is TSET complex member tstF.